The chain runs to 118 residues: MRQNQLIEKITNEQLRTDIPDFRAGDTVRVHARVVEGTRERIQLFEGVVIKRHGSGISETYTVRKISNGVGVERTFPLHTPRVAAIDVVRQGRVRRAKLYYLRNLHGKAARIPERRRG.

The protein belongs to the bacterial ribosomal protein bL19 family.

This protein is located at the 30S-50S ribosomal subunit interface and may play a role in the structure and function of the aminoacyl-tRNA binding site. The polypeptide is Large ribosomal subunit protein bL19 (Lactiplantibacillus plantarum (strain ATCC BAA-793 / NCIMB 8826 / WCFS1) (Lactobacillus plantarum)).